The chain runs to 721 residues: 1,4-alpha-glucan branching enzyme GlgB (721 aa).

Catalysis depends on Asp-404, which acts as the Nucleophile. The Proton donor role is filled by Glu-457.

The protein belongs to the glycosyl hydrolase 13 family. GlgB subfamily. Monomer.

The enzyme catalyses Transfers a segment of a (1-&gt;4)-alpha-D-glucan chain to a primary hydroxy group in a similar glucan chain.. The protein operates within glycan biosynthesis; glycogen biosynthesis. In terms of biological role, catalyzes the formation of the alpha-1,6-glucosidic linkages in glycogen by scission of a 1,4-alpha-linked oligosaccharide from growing alpha-1,4-glucan chains and the subsequent attachment of the oligosaccharide to the alpha-1,6 position. The sequence is that of 1,4-alpha-glucan branching enzyme GlgB from Novosphingobium aromaticivorans (strain ATCC 700278 / DSM 12444 / CCUG 56034 / CIP 105152 / NBRC 16084 / F199).